We begin with the raw amino-acid sequence, 319 residues long: Acetyl esterase (319 aa).

Positions 91–93 match the Involved in the stabilization of the negatively charged intermediate by the formation of the oxyanion hole motif; it reads HGG. Active-site residues include S165, D262, and H292.

Belongs to the 'GDXG' lipolytic enzyme family. In terms of assembly, homodimer. Interacts with MalT and MelA.

It localises to the cytoplasm. Functionally, displays esterase activity towards short chain fatty esters (acyl chain length of up to 8 carbons). Able to hydrolyze triacetylglycerol (triacetin) and tributyrylglycerol (tributyrin), but not trioleylglycerol (triolein) or cholesterol oleate. Negatively regulates MalT activity by antagonizing maltotriose binding. Inhibits MelA galactosidase activity. In Escherichia coli O7:K1 (strain IAI39 / ExPEC), this protein is Acetyl esterase.